Reading from the N-terminus, the 573-residue chain is Exonuclease V, mitochondrial (573 aa).

Residues C90, C538, C541, and C547 each contribute to the [4Fe-4S] cluster site.

Belongs to the EXO5 family. Monomer. Requires Mg(2+) as cofactor. [4Fe-4S] cluster is required as a cofactor.

The protein localises to the mitochondrion. Single strand DNA specific 5' exonuclease involved in mitochondrial DNA replication and recombination. Releases dinucleotides as main products of catalysis. Has the capacity to slide across 5'double-stranded DNA or 5'RNA sequences and resumes cutting two nucleotides downstream of the double-stranded-to-single-stranded junction or RNA-to-DNA junction, respectively. In Scheffersomyces stipitis (strain ATCC 58785 / CBS 6054 / NBRC 10063 / NRRL Y-11545) (Yeast), this protein is Exonuclease V, mitochondrial (EXO5).